The primary structure comprises 275 residues: Putative carbamate hydrolase RutD (275 aa).

It belongs to the AB hydrolase superfamily. Hydrolase RutD family.

It carries out the reaction carbamate + 2 H(+) = NH4(+) + CO2. Involved in pyrimidine catabolism. May facilitate the hydrolysis of carbamate, a reaction that can also occur spontaneously. This chain is Putative carbamate hydrolase RutD, found in Escherichia coli O6:H1 (strain CFT073 / ATCC 700928 / UPEC).